Consider the following 148-residue polypeptide: Lysozyme C (148 aa).

The first 18 residues, 1 to 18 (MKALLLLGLLLLSVTVQG), serve as a signal peptide directing secretion. Positions 19 to 148 (KIFERCDLAR…VSQYVRNCGV (130 aa)) constitute a C-type lysozyme domain. 4 disulfide bridges follow: Cys-24–Cys-146, Cys-48–Cys-134, Cys-83–Cys-99, and Cys-95–Cys-113. Catalysis depends on residues Glu-53 and Asp-71.

This sequence belongs to the glycosyl hydrolase 22 family. In terms of assembly, monomer.

It carries out the reaction Hydrolysis of (1-&gt;4)-beta-linkages between N-acetylmuramic acid and N-acetyl-D-glucosamine residues in a peptidoglycan and between N-acetyl-D-glucosamine residues in chitodextrins.. Lysozymes have primarily a bacteriolytic function; those in tissues and body fluids are associated with the monocyte-macrophage system and enhance the activity of immunoagents. This Halichoerus grypus (Gray seal) protein is Lysozyme C (LYZ).